Here is a 146-residue protein sequence, read N- to C-terminus: Protein JTB (146 aa).

The N-terminal stretch at 1 to 30 (MLAGAGRPGLPQGRHLCWLLCAFTLKLCQA) is a signal peptide. Over 31–105 (EAPVQEEKLS…CRSALMEQRL (75 aa)) the chain is Extracellular. Residues 106-126 (FWKFEGAVVCVALIFACLVII) form a helical membrane-spanning segment. Topologically, residues 127–146 (RQRQLDRKALEKVRKQIESI) are cytoplasmic.

This sequence belongs to the JTB family. Interacts with AURKA, AURKB, BIRC5 and INCENP. May be a component of the CPC at least composed of BIRC5/survivin, CDCA8/borealin, INCENP and AURKB/Aurora-B. Ubiquitous. Expressed in all normal human tissues studied but overexpressed or underexpressed in many of their malignant counterparts.

It is found in the membrane. Its subcellular location is the mitochondrion. It localises to the cytoplasm. The protein resides in the cytoskeleton. The protein localises to the microtubule organizing center. It is found in the centrosome. Its subcellular location is the spindle. Required for normal cytokinesis during mitosis. Plays a role in the regulation of cell proliferation. May be a component of the chromosomal passenger complex (CPC), a complex that acts as a key regulator of mitosis. The CPC complex has essential functions at the centromere in ensuring correct chromosome alignment and segregation and is required for chromatin-induced microtubule stabilization and spindle assembly. Increases AURKB activity. Inhibits apoptosis induced by TGFB1. Overexpression induces swelling of mitochondria and reduces mitochondrial membrane potential. In Homo sapiens (Human), this protein is Protein JTB (JTB).